A 409-amino-acid chain; its full sequence is Mitochondrial protein import protein MAS5 (409 aa).

The tract at residues 1-172 (MVKETKFYDI…NGQGIKFVTR (172 aa)) is necessary for HAP1 repression in the absence of heme. The J domain occupies 4–72 (ETKFYDILGV…RDIYDQFGED (69 aa)). Residues Ile116 and 135 to 137 (LAL) each bind substrate. The CR-type zinc finger occupies 130–213 (GRTAKLALNK…CNGKKVENER (84 aa)). Zn(2+) contacts are provided by Cys143, Cys146, Cys159, Cys162, Cys185, and Cys188. CXXCXGXG motif repeat units lie at residues 143-150 (CKECEGRG), 159-166 (CTSCNGQG), and 185-192 (CDVCHGTG). Lys198 is covalently cross-linked (Glycyl lysine isopeptide (Lys-Gly) (interchain with G-Cter in ubiquitin)). Residues Cys201 and Cys204 each contribute to the Zn(2+) site. A CXXCXGXG motif repeat occupies 201 to 208 (CKSCNGKK). Residues 215-216 (IL) and 247-249 (VVF) each bind substrate. Residues 382–409 (RTRASRGGANYDSDEEEQGGEGVQCASQ) are disordered. A Cysteine methyl ester modification is found at Cys406. A lipid anchor (S-farnesyl cysteine) is attached at Cys406. The propeptide at 407 to 409 (ASQ) is removed in mature form.

As to quaternary structure, homodimer. Interacts with HAP1. Component of the HMC including HAP1, SRO9 and YDJ1.

Its subcellular location is the cytoplasm. It is found in the perinuclear region. In terms of biological role, probably involved in mitochondrial protein import. Is also required for efficient translocation of pre-pro-alpha-factor. Involved in heme regulation of HAP1, as a component of the high-molecular-weight (HMC) complex. In Saccharomyces cerevisiae (strain ATCC 204508 / S288c) (Baker's yeast), this protein is Mitochondrial protein import protein MAS5 (YDJ1).